The sequence spans 497 residues: Cytochrome P450 3A18 (497 aa).

Cys-442 is a binding site for heme.

It belongs to the cytochrome P450 family. Requires heme as cofactor.

It localises to the endoplasmic reticulum membrane. It is found in the microsome membrane. It catalyses the reaction an organic molecule + reduced [NADPH--hemoprotein reductase] + O2 = an alcohol + oxidized [NADPH--hemoprotein reductase] + H2O + H(+). In terms of biological role, catalyzes 16-beta- and 6-alpha-hydroxylations of testosterone. The protein is Cytochrome P450 3A18 (Cyp3a18) of Rattus norvegicus (Rat).